A 155-amino-acid chain; its full sequence is 3-hydroxyacyl-[acyl-carrier-protein] dehydratase FabZ (155 aa).

His59 is a catalytic residue.

This sequence belongs to the thioester dehydratase family. FabZ subfamily.

It is found in the cytoplasm. It carries out the reaction a (3R)-hydroxyacyl-[ACP] = a (2E)-enoyl-[ACP] + H2O. In terms of biological role, involved in unsaturated fatty acids biosynthesis. Catalyzes the dehydration of short chain beta-hydroxyacyl-ACPs and long chain saturated and unsaturated beta-hydroxyacyl-ACPs. This chain is 3-hydroxyacyl-[acyl-carrier-protein] dehydratase FabZ, found in Bartonella quintana (strain Toulouse) (Rochalimaea quintana).